The primary structure comprises 105 residues: MIKYVLISALLVVAVYSFTIEDNEDALLEEAEDELDTEEERRMALPPGAVCNGHKSDCQCFGAKYKCSCPLLWRFRRSAKCHCKKGWAWTAIKKRSCHNRYQWSG.

A signal peptide spans 1-17 (MIKYVLISALLVVAVYS). Residues 18–41 (FTIEDNEDALLEEAEDELDTEEER) constitute a propeptide that is removed on maturation. Intrachain disulfides connect Cys-51–Cys-67, Cys-58–Cys-97, Cys-60–Cys-83, and Cys-69–Cys-81.

It belongs to the neurotoxin 04 (omega-agtx) family. 01 (type I omega-agtx) subfamily. As to expression, expressed by the venom gland.

The protein resides in the secreted. Its function is as follows. Insecticidal to house crickets. It induces an excitatory slow-onset impact that leads to irreversible spastic paralysis. It also modifies human voltage-gated potassium channel Kv1.5/KCNA5. Most likely, it binds to the voltage-sensing domain of the channel, suggesting it does not block the pore but prevents its opening at physiological membrane potentials. The recombinant peptide binds to the channel in an irreversible manner and slows down the hKv1.5 current activation kinetics. It is not toxic to mice, when intracranially injected (at 0.5 ug/g mouse). In Lycosa singoriensis (Wolf spider), this protein is U2-lycotoxin-Ls1a.